Here is a 180-residue protein sequence, read N- to C-terminus: Inner membrane-spanning protein YciB (180 aa).

5 consecutive transmembrane segments (helical) span residues Q25–V45, I54–I74, I76–I96, I118–V138, and F150–L170.

The protein belongs to the YciB family.

Its subcellular location is the cell inner membrane. Its function is as follows. Plays a role in cell envelope biogenesis, maintenance of cell envelope integrity and membrane homeostasis. The protein is Inner membrane-spanning protein YciB of Rickettsia canadensis (strain McKiel).